The chain runs to 1350 residues: 1-phosphatidylinositol 4,5-bisphosphate phosphodiesterase gamma plc-3 (1350 aa).

Residues 1 to 40 form a disordered region; sequence MQHGSLGPSSSSRKTTVTSTAGSVHLHHRSSNGFSTASRA. Residues 9 to 20 are compositionally biased toward low complexity; that stretch reads SSSSRKTTVTST. The segment covering 31–40 has biased composition (polar residues); that stretch reads SNGFSTASRA. Residues 352–503 form the PI-PLC X-box domain; sequence HDMSRPLSHY…LKKKIIVKHK (152 aa). Residues His-367 and His-419 contribute to the active site. Residues 570–594 are disordered; that stretch reads NPNDDTVSVSGDEEREEETPSGFGV. SH2 domains follow at residues 605–704 and 715–804; these read WFHG…TIPC and WFSA…RFPV. The SH3 domain occupies 832–890; the sequence is DKEVQARALRPYRGTADDELSFPANVIITVLRKEEGLWRGRYGSLTGWFPSAHVQEILP. The PH domain occupies 855–960; it reads ANVIITVLRK…WQNNLFELTR (106 aa). A PI-PLC Y-box domain is found at 982 to 1092; sequence LSNLVVYCQA…CGYLLKPDYM (111 aa). Positions 1099 to 1220 constitute a C2 domain; the sequence is PTNTEKFATA…CGFRSVPLKN (122 aa). The segment at 1270–1350 is disordered; sequence GDSIPREMAP…KFSFGKSSKS (81 aa). The segment covering 1283–1329 has biased composition (polar residues); it reads TSATDRSLDSPTNSESRATLLSGQRGSQDSMDSAAETSSIASGTISS. Positions 1340 to 1350 are enriched in low complexity; the sequence is KKFSFGKSSKS.

Requires Ca(2+) as cofactor. As to expression, expressed in intestine, isthmus of the pharynx, proximal gonad sheath cells, spermatheca and uterine sheath cells. In males, expressed in the valve cell, the vas deferens and retractor and ventral protactor muscles.

It catalyses the reaction a 1,2-diacyl-sn-glycero-3-phospho-(1D-myo-inositol-4,5-bisphosphate) + H2O = 1D-myo-inositol 1,4,5-trisphosphate + a 1,2-diacyl-sn-glycerol + H(+). Functionally, mediates the production of the second messenger molecules diacylglycerol (DAG) and inositol 1,4,5-trisphosphate (IP3) which plays an important role in the regulation of intracellular signaling cascades. Regulates basal and ovulatory sheath cell contractions by controlling Ca(2+) oscillations via IP3-mediated activation of IP3 receptor itr-1. In intestinal epithelial cells, regulates Ca(2+) oscillations which control posterior body wall muscle contractions required for defecation by IP3-mediated activation of itr-1 and probably by activating TRPM channels gon-2 and gtl-1 by reducing PIP2 levels. By activating tpa-1 via DAG production, required for the expression of antimicrobial peptide nlp-29 in the epidermis in response to fungal infection or physical injury. By triggering Ca(2+) transient via IP3-mediated activation of IPR3 receptor itr-1 in ASH sensory neurons, involved in avoidance behavior in response to nose touch. Probably by regulating neuronal transmission in ALA neurons, mediates the decrease in pharyngeal pumping and locomotion during the quiescent state that precedes each larval molt, downstream of lin-3 and receptor let-23 and upstream of tpa-1 but not itr-1. During embryogenesis, may play an role in epidermal morphogenesis together with plc-1. Probably downstream of receptor daf-2, regulates male-sex muscle excitability in the absence of food. The protein is 1-phosphatidylinositol 4,5-bisphosphate phosphodiesterase gamma plc-3 of Caenorhabditis elegans.